The sequence spans 447 residues: N-succinylarginine dihydrolase (447 aa).

Substrate is bound by residues 19-28 (AGLSFGNEAS), asparagine 110, and 137-138 (HR). Glutamate 174 is an active-site residue. Arginine 212 serves as a coordination point for substrate. Histidine 248 is a catalytic residue. 2 residues coordinate substrate: aspartate 250 and asparagine 359. Catalysis depends on cysteine 365, which acts as the Nucleophile.

Belongs to the succinylarginine dihydrolase family. As to quaternary structure, homodimer.

The enzyme catalyses N(2)-succinyl-L-arginine + 2 H2O + 2 H(+) = N(2)-succinyl-L-ornithine + 2 NH4(+) + CO2. Its pathway is amino-acid degradation; L-arginine degradation via AST pathway; L-glutamate and succinate from L-arginine: step 2/5. Catalyzes the hydrolysis of N(2)-succinylarginine into N(2)-succinylornithine, ammonia and CO(2). This chain is N-succinylarginine dihydrolase, found in Salmonella arizonae (strain ATCC BAA-731 / CDC346-86 / RSK2980).